A 291-amino-acid chain; its full sequence is Pyridoxal 5'-phosphate synthase subunit PdxS (291 aa).

Position 23 (D23) interacts with D-ribose 5-phosphate. K80 acts as the Schiff-base intermediate with D-ribose 5-phosphate in catalysis. G152 serves as a coordination point for D-ribose 5-phosphate. R164 serves as a coordination point for D-glyceraldehyde 3-phosphate. D-ribose 5-phosphate contacts are provided by residues G213 and 234 to 235 (GS).

This sequence belongs to the PdxS/SNZ family. In the presence of PdxT, forms a dodecamer of heterodimers.

It carries out the reaction aldehydo-D-ribose 5-phosphate + D-glyceraldehyde 3-phosphate + L-glutamine = pyridoxal 5'-phosphate + L-glutamate + phosphate + 3 H2O + H(+). The protein operates within cofactor biosynthesis; pyridoxal 5'-phosphate biosynthesis. Its function is as follows. Catalyzes the formation of pyridoxal 5'-phosphate from ribose 5-phosphate (RBP), glyceraldehyde 3-phosphate (G3P) and ammonia. The ammonia is provided by the PdxT subunit. Can also use ribulose 5-phosphate and dihydroxyacetone phosphate as substrates, resulting from enzyme-catalyzed isomerization of RBP and G3P, respectively. The sequence is that of Pyridoxal 5'-phosphate synthase subunit PdxS from Haemophilus influenzae (strain ATCC 51907 / DSM 11121 / KW20 / Rd).